A 176-amino-acid polypeptide reads, in one-letter code: Tubulin polymerization-promoting protein family member 3 (176 aa).

The disordered stretch occupies residues 126–152 (TDTSKYTGSHKERFDESGKGKGKGGRE). Residues 134-152 (SHKERFDESGKGKGKGGRE) are compositionally biased toward basic and acidic residues.

This sequence belongs to the TPPP family.

It localises to the cytoplasm. Its subcellular location is the cytoskeleton. Its function is as follows. Regulator of microtubule dynamic that has microtubule bundling activity. In Xenopus tropicalis (Western clawed frog), this protein is Tubulin polymerization-promoting protein family member 3 (tppp3).